The following is a 647-amino-acid chain: Threonine--tRNA ligase (647 aa).

One can recognise a TGS domain in the interval 1–61; that stretch reads MIKITFPDGA…EEDGSIEIVT (61 aa). The interval 240-538 is catalytic; that stretch reads DHRKLGKELD…LIETYKGAFP (299 aa). Residues Cys-334, His-385, and His-515 each coordinate Zn(2+).

The protein belongs to the class-II aminoacyl-tRNA synthetase family. Homodimer. Requires Zn(2+) as cofactor.

It is found in the cytoplasm. The catalysed reaction is tRNA(Thr) + L-threonine + ATP = L-threonyl-tRNA(Thr) + AMP + diphosphate + H(+). In terms of biological role, catalyzes the attachment of threonine to tRNA(Thr) in a two-step reaction: L-threonine is first activated by ATP to form Thr-AMP and then transferred to the acceptor end of tRNA(Thr). Also edits incorrectly charged L-seryl-tRNA(Thr). The chain is Threonine--tRNA ligase from Streptococcus pyogenes serotype M18 (strain MGAS8232).